A 427-amino-acid polypeptide reads, in one-letter code: Adenylosuccinate synthetase (427 aa).

GTP contacts are provided by residues 12–18 (GDEGKGK) and 40–42 (GHT). Aspartate 13 serves as the catalytic Proton acceptor. 2 residues coordinate Mg(2+): aspartate 13 and glycine 40. IMP contacts are provided by residues 13–16 (DEGK), 38–41 (NAGH), threonine 128, arginine 142, glutamine 223, threonine 238, and arginine 302. Histidine 41 functions as the Proton donor in the catalytic mechanism. 298 to 304 (TTTGRPR) provides a ligand contact to substrate. Residues arginine 304, 330 to 332 (SID), and 412 to 414 (SVG) contribute to the GTP site.

It belongs to the adenylosuccinate synthetase family. Homodimer. Mg(2+) is required as a cofactor.

It localises to the cytoplasm. It carries out the reaction IMP + L-aspartate + GTP = N(6)-(1,2-dicarboxyethyl)-AMP + GDP + phosphate + 2 H(+). It functions in the pathway purine metabolism; AMP biosynthesis via de novo pathway; AMP from IMP: step 1/2. Functionally, plays an important role in the de novo pathway of purine nucleotide biosynthesis. Catalyzes the first committed step in the biosynthesis of AMP from IMP. This is Adenylosuccinate synthetase from Staphylococcus saprophyticus subsp. saprophyticus (strain ATCC 15305 / DSM 20229 / NCIMB 8711 / NCTC 7292 / S-41).